The sequence spans 273 residues: Glutamate transport system permease protein GluD (273 aa).

A run of 5 helical transmembrane segments spans residues isoleucine 26–valine 46, tryptophan 64–phenylalanine 84, leucine 100–isoleucine 120, isoleucine 150–alanine 170, and leucine 200–leucine 220. In terms of domain architecture, ABC transmembrane type-1 spans leucine 30–alanine 221. Positions proline 242–glutamine 273 are disordered. Over residues proline 262–glutamine 273 the composition is skewed to basic and acidic residues.

The protein belongs to the binding-protein-dependent transport system permease family. HisMQ subfamily. As to quaternary structure, the complex is composed of two ATP-binding proteins (GluA), two transmembrane proteins (GluC and GluD) and a solute-binding protein (GluB).

The protein resides in the cell membrane. Functionally, part of the ABC transporter complex GluABCD involved in glutamate uptake. Probably responsible for the translocation of the substrate across the membrane. This Corynebacterium glutamicum (strain ATCC 13032 / DSM 20300 / JCM 1318 / BCRC 11384 / CCUG 27702 / LMG 3730 / NBRC 12168 / NCIMB 10025 / NRRL B-2784 / 534) protein is Glutamate transport system permease protein GluD.